A 396-amino-acid chain; its full sequence is L-lactate dehydrogenase (396 aa).

An FMN hydroxy acid dehydrogenase domain is found at 1–380 (MIISAASDYR…SGDSLVQELG (380 aa)). Y24 is a substrate binding site. Positions 106 and 127 each coordinate FMN. Residue Y129 coordinates substrate. T155 provides a ligand contact to FMN. Residue R164 participates in substrate binding. Position 251 (K251) interacts with FMN. H275 (proton acceptor) is an active-site residue. R278 is a substrate binding site. 306–330 (DSGIRNGLDVVRMIALGADTVLLGR) is a binding site for FMN.

Belongs to the FMN-dependent alpha-hydroxy acid dehydrogenase family. FMN is required as a cofactor.

The protein localises to the cell inner membrane. The enzyme catalyses (S)-lactate + A = pyruvate + AH2. Catalyzes the conversion of L-lactate to pyruvate. Is coupled to the respiratory chain. This is L-lactate dehydrogenase from Salmonella paratyphi A (strain ATCC 9150 / SARB42).